The primary structure comprises 904 residues: DNA mismatch repair protein MutS (904 aa).

Position 654-661 (654-661 (GPNMAGKS)) interacts with ATP.

This sequence belongs to the DNA mismatch repair MutS family.

This protein is involved in the repair of mismatches in DNA. It is possible that it carries out the mismatch recognition step. This protein has a weak ATPase activity. The protein is DNA mismatch repair protein MutS of Caulobacter sp. (strain K31).